A 101-amino-acid polypeptide reads, in one-letter code: Aspartyl/glutamyl-tRNA(Asn/Gln) amidotransferase subunit C (101 aa).

It belongs to the GatC family. In terms of assembly, heterotrimer of A, B and C subunits.

The catalysed reaction is L-glutamyl-tRNA(Gln) + L-glutamine + ATP + H2O = L-glutaminyl-tRNA(Gln) + L-glutamate + ADP + phosphate + H(+). It catalyses the reaction L-aspartyl-tRNA(Asn) + L-glutamine + ATP + H2O = L-asparaginyl-tRNA(Asn) + L-glutamate + ADP + phosphate + 2 H(+). Its function is as follows. Allows the formation of correctly charged Asn-tRNA(Asn) or Gln-tRNA(Gln) through the transamidation of misacylated Asp-tRNA(Asn) or Glu-tRNA(Gln) in organisms which lack either or both of asparaginyl-tRNA or glutaminyl-tRNA synthetases. The reaction takes place in the presence of glutamine and ATP through an activated phospho-Asp-tRNA(Asn) or phospho-Glu-tRNA(Gln). This Salinispora tropica (strain ATCC BAA-916 / DSM 44818 / JCM 13857 / NBRC 105044 / CNB-440) protein is Aspartyl/glutamyl-tRNA(Asn/Gln) amidotransferase subunit C.